The sequence spans 310 residues: MILTLTLNPSVDISYPLTALKLDDVNRVQEVSKTAGGKGLNVTRVLAQVGEPVLASGFIGGELGQFIAKKLDHADIKHAFYNIKGETRNCIAILHEGQQTEILEQGPEIDNQEAAGFIKHFEQLLEKVEAVAISGSLPKGLNQDYYAQIIERCQNKGVPVILDCSGATLQTVLENPYKPTVIKPNISELYQLLNQPLDESLESLKQAVSQPLFEGIEWIIVSLGAQGAFAKHNHTFYRVNIPTISVLNPVGSGDSTVAGITSAILNHENDHDLLKKANTLGMLNAQEAQTGYVNLNNYDDLFNQIEVLEV.

It belongs to the carbohydrate kinase PfkB family. LacC subfamily.

The enzyme catalyses D-tagatofuranose 6-phosphate + ATP = D-tagatofuranose 1,6-bisphosphate + ADP + H(+). The protein operates within carbohydrate metabolism; D-tagatose 6-phosphate degradation; D-glyceraldehyde 3-phosphate and glycerone phosphate from D-tagatose 6-phosphate: step 1/2. The chain is Tagatose-6-phosphate kinase from Staphylococcus aureus (strain USA300 / TCH1516).